The chain runs to 355 residues: Probable butyrate kinase (355 aa).

This sequence belongs to the acetokinase family.

The protein resides in the cytoplasm. It carries out the reaction butanoate + ATP = butanoyl phosphate + ADP. This Listeria monocytogenes serovar 1/2a (strain ATCC BAA-679 / EGD-e) protein is Probable butyrate kinase.